The chain runs to 272 residues: Glutamate racemase (272 aa).

Residues 16–17 and 48–49 each bind substrate; these read DS and YG. The active-site Proton donor/acceptor is Cys-79. 80-81 provides a ligand contact to substrate; the sequence is NT. Cys-191 functions as the Proton donor/acceptor in the catalytic mechanism. Position 192-193 (192-193) interacts with substrate; it reads TH.

The protein belongs to the aspartate/glutamate racemases family.

It catalyses the reaction L-glutamate = D-glutamate. It functions in the pathway cell wall biogenesis; peptidoglycan biosynthesis. Its function is as follows. Provides the (R)-glutamate required for cell wall biosynthesis. This is Glutamate racemase from Chlorobium phaeobacteroides (strain DSM 266 / SMG 266 / 2430).